The chain runs to 783 residues: ATP-dependent DNA helicase Hel308 (783 aa).

ATP contacts are provided by residues Q29 and 47-54 (VPTASGKT). The 176-residue stretch at 34 to 209 (ERGVTEGANL…WLDAELVDSD (176 aa)) folds into the Helicase ATP-binding domain. Positions 154–157 (DEVH) match the DEAH box motif. A Helicase C-terminal domain is found at 242-443 (QTAAVVADTL…EPALRTHVLA (202 aa)). The segment at 744–783 (ETVGHPDPGMDGVAADTDAAPESGGEAGGDEGQASLGDFS) is disordered.

The protein belongs to the helicase family. Hel308 subfamily. Monomer.

It catalyses the reaction Couples ATP hydrolysis with the unwinding of duplex DNA by translocating in the 3'-5' direction.. The enzyme catalyses ATP + H2O = ADP + phosphate + H(+). DNA-dependent ATPase and 3'-5' DNA helicase that may be involved in repair of stalled replication forks. This is ATP-dependent DNA helicase Hel308 from Halobacterium salinarum (strain ATCC 700922 / JCM 11081 / NRC-1) (Halobacterium halobium).